Consider the following 370-residue polypeptide: Gibberellin 3-beta-dioxygenase 2-2 (370 aa).

Residues 205–306 form the Fe2OG dioxygenase domain; the sequence is MTATMHLNWY…RISLGYFLGP (102 aa). Fe cation contacts are provided by His-229, Asp-231, and His-287. Residue Arg-297 is part of the active site.

It belongs to the iron/ascorbate-dependent oxidoreductase family. GA3OX subfamily. L-ascorbate serves as cofactor. Fe cation is required as a cofactor.

The enzyme catalyses gibberellin A20 + 2-oxoglutarate + O2 = gibberellin A1 + succinate + CO2. In terms of biological role, converts the inactive gibberellin precursors GA9 and GA20 in the bioactives gibberellins GA4 and GA1. This is Gibberellin 3-beta-dioxygenase 2-2 (GA3ox2-2) from Triticum aestivum (Wheat).